The chain runs to 132 residues: Phosphoribosyl-AMP cyclohydrolase (132 aa).

Residue Asp-79 coordinates Mg(2+). Cys-80 contributes to the Zn(2+) binding site. 2 residues coordinate Mg(2+): Asp-81 and Asp-83. 2 residues coordinate Zn(2+): Cys-100 and Cys-107.

This sequence belongs to the PRA-CH family. Homodimer. Mg(2+) serves as cofactor. It depends on Zn(2+) as a cofactor.

It is found in the cytoplasm. It catalyses the reaction 1-(5-phospho-beta-D-ribosyl)-5'-AMP + H2O = 1-(5-phospho-beta-D-ribosyl)-5-[(5-phospho-beta-D-ribosylamino)methylideneamino]imidazole-4-carboxamide. The protein operates within amino-acid biosynthesis; L-histidine biosynthesis; L-histidine from 5-phospho-alpha-D-ribose 1-diphosphate: step 3/9. Functionally, catalyzes the hydrolysis of the adenine ring of phosphoribosyl-AMP. This Acidovorax sp. (strain JS42) protein is Phosphoribosyl-AMP cyclohydrolase.